We begin with the raw amino-acid sequence, 187 residues long: Hypoxanthine/guanine phosphoribosyltransferase (187 aa).

It belongs to the purine/pyrimidine phosphoribosyltransferase family. Archaeal HPRT subfamily. In terms of assembly, homodimer.

It is found in the cytoplasm. It carries out the reaction IMP + diphosphate = hypoxanthine + 5-phospho-alpha-D-ribose 1-diphosphate. The enzyme catalyses GMP + diphosphate = guanine + 5-phospho-alpha-D-ribose 1-diphosphate. It participates in purine metabolism; IMP biosynthesis via salvage pathway; IMP from hypoxanthine: step 1/1. In terms of biological role, catalyzes a salvage reaction resulting in the formation of IMP that is energically less costly than de novo synthesis. In Ferroglobus placidus (strain DSM 10642 / AEDII12DO), this protein is Hypoxanthine/guanine phosphoribosyltransferase.